The chain runs to 330 residues: MMGSLKIISPPPPATRFRQRVTANGDGFPTFLPKEIQNIKDPFARALAQRIVRIPVPLQMGNFRGSVMSSCIKPLVQLHDKSPVVLLHCFDSSCLEWRRTYPLLEQACLETWAIDVLGWGFSDLEKLPPCDAASKRHHLFELWKTYIKRPMILVGPSLGATVAVDFTATYPEAVDKLVLINANAYSEGTGRLKELPKSIAYAGVKLLKSFPLRLLANVLAFCSSPLSENIDWTNIGRLHCQMPWWEDAMVDFMISGGYNVASHIKHIDHKTLVVCSENDQIVSNQLSVKLLCELANAVLREVPDSGHLPHVENPKHIVKLISDFASGKLY.

The AB hydrolase-1 domain occupies 84-315 (VVLLHCFDSS…GHLPHVENPK (232 aa)). Ser-157 serves as the catalytic Nucleophile. Residues Asp-279 and His-307 each act as charge relay system in the active site.

Belongs to the AB hydrolase superfamily.

The protein resides in the plastid. The protein localises to the chloroplast envelope. Its function is as follows. Hydrolase involved in tocopherol (vitamin E) biosynthesis. Releases prenyl alcohols from chlorophyll biosynthetic intermediates, which are then converted to the corresponding diphosphates for tocopherol biosynthesis. Provides most of the phytol from chlorophyll for tocopherol biosynthesis in seeds. This is Alpha/beta hydrolase domain-containing protein VTE7 from Arabidopsis thaliana (Mouse-ear cress).